The primary structure comprises 488 residues: Probable cytosol aminopeptidase (488 aa).

Mn(2+)-binding residues include K251 and D256. The active site involves K263. Mn(2+) is bound by residues D274, D333, and E335. R337 is a catalytic residue.

It belongs to the peptidase M17 family. Requires Mn(2+) as cofactor.

The protein resides in the cytoplasm. The catalysed reaction is Release of an N-terminal amino acid, Xaa-|-Yaa-, in which Xaa is preferably Leu, but may be other amino acids including Pro although not Arg or Lys, and Yaa may be Pro. Amino acid amides and methyl esters are also readily hydrolyzed, but rates on arylamides are exceedingly low.. It catalyses the reaction Release of an N-terminal amino acid, preferentially leucine, but not glutamic or aspartic acids.. Functionally, presumably involved in the processing and regular turnover of intracellular proteins. Catalyzes the removal of unsubstituted N-terminal amino acids from various peptides. This chain is Probable cytosol aminopeptidase, found in Cenarchaeum symbiosum (strain A).